Reading from the N-terminus, the 72-residue chain is DNA-directed RNA polymerase subunit omega (72 aa).

This sequence belongs to the RNA polymerase subunit omega family. As to quaternary structure, the RNAP catalytic core consists of 2 alpha, 1 beta, 1 beta' and 1 omega subunit. When a sigma factor is associated with the core the holoenzyme is formed, which can initiate transcription.

The catalysed reaction is RNA(n) + a ribonucleoside 5'-triphosphate = RNA(n+1) + diphosphate. In terms of biological role, promotes RNA polymerase assembly. Latches the N- and C-terminal regions of the beta' subunit thereby facilitating its interaction with the beta and alpha subunits. This Clostridium botulinum (strain Langeland / NCTC 10281 / Type F) protein is DNA-directed RNA polymerase subunit omega.